A 92-amino-acid chain; its full sequence is Non-specific lipid-transfer protein B (92 aa).

4 disulfide bridges follow: Cys-3/Cys-51, Cys-13/Cys-28, Cys-29/Cys-74, and Cys-49/Cys-88.

Belongs to the plant LTP family.

In terms of biological role, plant non-specific lipid-transfer proteins transfer phospholipids as well as galactolipids across membranes. May play a role in wax or cutin deposition in the cell walls of expanding epidermal cells and certain secretory tissues. This Ricinus communis (Castor bean) protein is Non-specific lipid-transfer protein B.